Consider the following 152-residue polypeptide: Transcriptional repressor NrdR (152 aa).

Residues 3-34 (CPFCGHADTQVVDSRVSEDGASIRRRRRCLEC) fold into a zinc finger. Residues 49–139 (PQVVKQDGHR…VYRSFQDVAE (91 aa)) form the ATP-cone domain.

It belongs to the NrdR family. Zn(2+) is required as a cofactor.

Negatively regulates transcription of bacterial ribonucleotide reductase nrd genes and operons by binding to NrdR-boxes. In Laribacter hongkongensis (strain HLHK9), this protein is Transcriptional repressor NrdR.